A 222-amino-acid chain; its full sequence is Ribonuclease 3 (222 aa).

The 123-residue stretch at P5–G127 folds into the RNase III domain. E41 contacts Mg(2+). Residue D45 is part of the active site. Mg(2+)-binding residues include D113 and E116. The active site involves E116. The DRBM domain maps to D152–K221.

The protein belongs to the ribonuclease III family. As to quaternary structure, homodimer. Mg(2+) serves as cofactor.

Its subcellular location is the cytoplasm. It carries out the reaction Endonucleolytic cleavage to 5'-phosphomonoester.. Functionally, digests double-stranded RNA. Involved in the processing of primary rRNA transcript to yield the immediate precursors to the large and small rRNAs (23S and 16S). Processes some mRNAs, and tRNAs when they are encoded in the rRNA operon. Processes pre-crRNA and tracrRNA of type II CRISPR loci if present in the organism. The protein is Ribonuclease 3 of Pelagibacter ubique (strain HTCC1062).